The chain runs to 448 residues: Probable glycine dehydrogenase (decarboxylating) subunit 1 (448 aa).

The protein belongs to the GcvP family. N-terminal subunit subfamily. In terms of assembly, the glycine cleavage system is composed of four proteins: P, T, L and H. In this organism, the P 'protein' is a heterodimer of two subunits.

The catalysed reaction is N(6)-[(R)-lipoyl]-L-lysyl-[glycine-cleavage complex H protein] + glycine + H(+) = N(6)-[(R)-S(8)-aminomethyldihydrolipoyl]-L-lysyl-[glycine-cleavage complex H protein] + CO2. In terms of biological role, the glycine cleavage system catalyzes the degradation of glycine. The P protein binds the alpha-amino group of glycine through its pyridoxal phosphate cofactor; CO(2) is released and the remaining methylamine moiety is then transferred to the lipoamide cofactor of the H protein. The polypeptide is Probable glycine dehydrogenase (decarboxylating) subunit 1 (Staphylococcus carnosus (strain TM300)).